The following is a 194-amino-acid chain: Large ribosomal subunit protein eL15 (194 aa).

Positions 165 to 194 (AGKKGRGLRNKGKGAEKVRPSIRANEGKGK) are disordered. The segment covering 167 to 176 (KKGRGLRNKG) has biased composition (basic residues). The segment covering 177–194 (KGAEKVRPSIRANEGKGK) has biased composition (basic and acidic residues).

It belongs to the eukaryotic ribosomal protein eL15 family. In terms of assembly, part of the 50S ribosomal subunit.

In Pyrococcus furiosus (strain ATCC 43587 / DSM 3638 / JCM 8422 / Vc1), this protein is Large ribosomal subunit protein eL15.